The primary structure comprises 312 residues: Ribosomal RNA small subunit methyltransferase H (312 aa).

S-adenosyl-L-methionine is bound by residues 33–35, Asp-53, Phe-79, Asp-100, and Gln-107; that span reads AGH.

The protein belongs to the methyltransferase superfamily. RsmH family.

It is found in the cytoplasm. It carries out the reaction cytidine(1402) in 16S rRNA + S-adenosyl-L-methionine = N(4)-methylcytidine(1402) in 16S rRNA + S-adenosyl-L-homocysteine + H(+). In terms of biological role, specifically methylates the N4 position of cytidine in position 1402 (C1402) of 16S rRNA. The polypeptide is Ribosomal RNA small subunit methyltransferase H (Clostridium acetobutylicum (strain ATCC 824 / DSM 792 / JCM 1419 / IAM 19013 / LMG 5710 / NBRC 13948 / NRRL B-527 / VKM B-1787 / 2291 / W)).